Reading from the N-terminus, the 55-residue chain is Large ribosomal subunit protein bL33 (55 aa).

Belongs to the bacterial ribosomal protein bL33 family.

The protein is Large ribosomal subunit protein bL33 (rpmG) of Nitrobacter hamburgensis (strain DSM 10229 / NCIMB 13809 / X14).